The sequence spans 331 residues: Isopentenyl-diphosphate delta-isomerase (331 aa).

Residue 4-5 participates in substrate binding; sequence RK. Residues 59 to 61, Ser89, and Asn116 contribute to the FMN site; that span reads AMT. Gln146 provides a ligand contact to substrate. Residue Glu147 coordinates Mg(2+). Residues Lys178, Ser203, Thr208, 252-254, and 273-274 each bind FMN; these read GIR and SR.

Belongs to the IPP isomerase type 2 family. As to quaternary structure, homooctamer. Dimer of tetramers. It depends on FMN as a cofactor. NADPH serves as cofactor. Requires Mg(2+) as cofactor.

The protein resides in the cytoplasm. The enzyme catalyses isopentenyl diphosphate = dimethylallyl diphosphate. In terms of biological role, involved in the biosynthesis of isoprenoids. Catalyzes the 1,3-allylic rearrangement of the homoallylic substrate isopentenyl (IPP) to its allylic isomer, dimethylallyl diphosphate (DMAPP). The chain is Isopentenyl-diphosphate delta-isomerase from Streptococcus mutans serotype c (strain ATCC 700610 / UA159).